A 247-amino-acid polypeptide reads, in one-letter code: Small ribosomal subunit protein uS3 (247 aa).

The 73-residue stretch at 39–111 folds into the KH type-2 domain; that stretch reads IYDFFDKKVR…NISIQVIELK (73 aa). The tract at residues 221–247 is disordered; sequence EEMDLLNAPKDRRVRRGGERHASTKKN. Basic and acidic residues predominate over residues 236-247; it reads RGGERHASTKKN.

Belongs to the universal ribosomal protein uS3 family. In terms of assembly, part of the 30S ribosomal subunit. Forms a tight complex with proteins S10 and S14.

Binds the lower part of the 30S subunit head. Binds mRNA in the 70S ribosome, positioning it for translation. In Metamycoplasma arthritidis (strain 158L3-1) (Mycoplasma arthritidis), this protein is Small ribosomal subunit protein uS3.